The following is a 682-amino-acid chain: DNA ligase (682 aa).

NAD(+)-binding positions include 42–46, 91–92, and glutamate 124; these read DAEYD and SL. The N6-AMP-lysine intermediate role is filled by lysine 126. Residues arginine 147, glutamate 184, lysine 302, and lysine 326 each contribute to the NAD(+) site. Zn(2+) is bound by residues cysteine 420, cysteine 423, cysteine 438, and cysteine 444. The 80-residue stretch at 603–682 folds into the BRCT domain; that stretch reads IADNPLKGKS…QEFIALTGEN (80 aa).

It belongs to the NAD-dependent DNA ligase family. LigA subfamily. The cofactor is Mg(2+). Requires Mn(2+) as cofactor.

The catalysed reaction is NAD(+) + (deoxyribonucleotide)n-3'-hydroxyl + 5'-phospho-(deoxyribonucleotide)m = (deoxyribonucleotide)n+m + AMP + beta-nicotinamide D-nucleotide.. Functionally, DNA ligase that catalyzes the formation of phosphodiester linkages between 5'-phosphoryl and 3'-hydroxyl groups in double-stranded DNA using NAD as a coenzyme and as the energy source for the reaction. It is essential for DNA replication and repair of damaged DNA. This Actinobacillus pleuropneumoniae serotype 3 (strain JL03) protein is DNA ligase.